The sequence spans 504 residues: Xylose import ATP-binding protein XylG (504 aa).

2 consecutive ABC transporter domains span residues 6 to 243 and 262 to 504; these read LEMQ…VGRE and VRNF…TGGK. 38-45 contacts ATP; it reads GENGAGKS.

This sequence belongs to the ABC transporter superfamily. Xylose importer (TC 3.A.1.2.4) family. In terms of assembly, the complex is composed of two ATP-binding proteins (XylG), two transmembrane proteins (XylH) and a solute-binding protein (XylF).

The protein resides in the cell membrane. It carries out the reaction D-xylose(out) + ATP + H2O = D-xylose(in) + ADP + phosphate + H(+). In terms of biological role, part of the ABC transporter complex XylFGH involved in xylose import. Responsible for energy coupling to the transport system. This chain is Xylose import ATP-binding protein XylG, found in Moorella thermoacetica (strain ATCC 39073 / JCM 9320).